The sequence spans 201 residues: Thymidylate kinase (201 aa).

Position 7-14 (7-14 (GIDGSGKS)) interacts with ATP.

Belongs to the thymidylate kinase family.

It carries out the reaction dTMP + ATP = dTDP + ADP. In terms of biological role, phosphorylation of dTMP to form dTDP in both de novo and salvage pathways of dTTP synthesis. This is Thymidylate kinase from Thermosipho africanus (strain TCF52B).